We begin with the raw amino-acid sequence, 497 residues long: Lysine--tRNA ligase (497 aa).

2 residues coordinate Mg(2+): Glu405 and Glu412.

Belongs to the class-II aminoacyl-tRNA synthetase family. As to quaternary structure, homodimer. Requires Mg(2+) as cofactor.

The protein resides in the cytoplasm. It carries out the reaction tRNA(Lys) + L-lysine + ATP = L-lysyl-tRNA(Lys) + AMP + diphosphate. The protein is Lysine--tRNA ligase of Gloeobacter violaceus (strain ATCC 29082 / PCC 7421).